Here is a 277-residue protein sequence, read N- to C-terminus: Ubiquitin-conjugating enzyme suppressor 1 (277 aa).

A disordered region spans residues 254–277; the sequence is RTLACPDETNDNRGSEHYTKRKKI.

Functionally, not known; its elevated expression suppresses the conditional cell cycle defects associated with UBC3/CDC34 mutations. This chain is Ubiquitin-conjugating enzyme suppressor 1 (UBS1), found in Saccharomyces cerevisiae (strain ATCC 204508 / S288c) (Baker's yeast).